Consider the following 187-residue polypeptide: MPGGLEKTCHQCISKIASNACFVVVLCAFLALPLSMTFIGMKFLEDCPIQPLIPLYLLVGGIVGTLKVSLLLYDSTRMRRLLSKAVVIDDDDDDEYPWRQNAHRYYIHLLLSLFLFLWFILGNYWVFSVYLPDFLPPFQQPQDYCDKTLYLFAVGVLALSHTVLVLLLLCSGCVYLCSRWRLAADED.

4 helical membrane passes run 21–41 (CFVV…FIGM), 52–72 (LIPL…SLLL), 107–127 (IHLL…YWVF), and 149–169 (LYLF…LLLL).

It localises to the membrane. This is Transmembrane protein 272 from Homo sapiens (Human).